The chain runs to 330 residues: MSNVVVCALYKFVSLPHFESLREPLLSMMEQADIKGTLLLANEGINGTVAGSQAAIDALLAWLNNQNGLENIVYKLSFDDEMPFYRTKVKLKKEIVTMGVEGIDPLKVVGTYVKPQDWNALISDPEVILVDTRNDYEVQIGTFKNAINPVTETFREFPEYVKQNLDPAKHKKVAMFCTGGIRCEKSTAYLKEQGFEEVYHLEGGILKYLEEVKQEESLWEGECFVFDNRVAVDHDLKKGQYDQCNACRMPITEAEKLSPAYVQGVSCPHCIDKISDEQRKRFVERERQVNLAKSRNEAHIGSDVNQVIEARRQKKEALRQQSAEKNKAKQ.

Residues 123-217 (SDPEVILVDT…YLEEVKQEES (95 aa)) form the Rhodanese domain. Cysteine 177 functions as the Cysteine persulfide intermediate in the catalytic mechanism.

Belongs to the TrhO family.

It catalyses the reaction uridine(34) in tRNA + AH2 + O2 = 5-hydroxyuridine(34) in tRNA + A + H2O. Its function is as follows. Catalyzes oxygen-dependent 5-hydroxyuridine (ho5U) modification at position 34 in tRNAs. The chain is tRNA uridine(34) hydroxylase from Shewanella sp. (strain ANA-3).